We begin with the raw amino-acid sequence, 936 residues long: Isoleucine--tRNA ligase (936 aa).

Residues 58-68 (PYANGRAHLGT) carry the 'HIGH' region motif. Position 561 (Glu-561) interacts with L-isoleucyl-5'-AMP. The short motif at 602-606 (KMSKS) is the 'KMSKS' region element. Residue Lys-605 coordinates ATP. 4 residues coordinate Zn(2+): Cys-899, Cys-902, Cys-919, and Cys-922.

Belongs to the class-I aminoacyl-tRNA synthetase family. IleS type 1 subfamily. In terms of assembly, monomer. Zn(2+) serves as cofactor.

The protein localises to the cytoplasm. The enzyme catalyses tRNA(Ile) + L-isoleucine + ATP = L-isoleucyl-tRNA(Ile) + AMP + diphosphate. In terms of biological role, catalyzes the attachment of isoleucine to tRNA(Ile). As IleRS can inadvertently accommodate and process structurally similar amino acids such as valine, to avoid such errors it has two additional distinct tRNA(Ile)-dependent editing activities. One activity is designated as 'pretransfer' editing and involves the hydrolysis of activated Val-AMP. The other activity is designated 'posttransfer' editing and involves deacylation of mischarged Val-tRNA(Ile). The sequence is that of Isoleucine--tRNA ligase from Coxiella burnetii (strain Dugway 5J108-111).